An 87-amino-acid chain; its full sequence is uncharacterized protein (87 aa).

A 2Fe-2S ferredoxin-type domain is found at 4–87 (SIIEITNIKK…KPKGNITIKI (84 aa)). Cys-38, Cys-43, Cys-46, and Cys-75 together coordinate [2Fe-2S] cluster.

The cofactor is [2Fe-2S] cluster.

This is an uncharacterized protein from Buchnera aphidicola subsp. Acyrthosiphon pisum (strain APS) (Acyrthosiphon pisum symbiotic bacterium).